Here is a 257-residue protein sequence, read N- to C-terminus: Transmembrane protein 101 (257 aa).

8 helical membrane-spanning segments follow: residues 21-40 (VLLT…LYAE), 52-72 (VPYL…MSFG), 77-97 (WFAL…YIGG), 110-130 (YSRT…AGEL), 139-159 (SLQS…AYSL), 182-202 (LFFV…YVTL), 206-226 (ILAV…AYWH), and 233-253 (FWNQ…AVIL).

It localises to the membrane. Its function is as follows. May activate NF-kappa-B signaling pathways. This chain is Transmembrane protein 101 (TMEM101), found in Pongo abelii (Sumatran orangutan).